The following is a 359-amino-acid chain: MAP kinase-activated protein kinase 2 (359 aa).

In terms of domain architecture, Protein kinase spans 20–281 (VTSNTVLGYG…IQDVISNKWI (262 aa)). Residues 26–34 (LGYGINGKV) and Lys49 contribute to the ATP site. Asp142 serves as the catalytic Proton acceptor.

The protein belongs to the protein kinase superfamily. CAMK Ser/Thr protein kinase family. Phosphorylated and activated by MAP kinase.

The catalysed reaction is L-seryl-[protein] + ATP = O-phospho-L-seryl-[protein] + ADP + H(+). It catalyses the reaction L-threonyl-[protein] + ATP = O-phospho-L-threonyl-[protein] + ADP + H(+). Its function is as follows. Its physiological substrate seems to be the small heat shock protein (HSP27/HSP25). The sequence is that of MAP kinase-activated protein kinase 2 (MAPk-Ak2) from Drosophila melanogaster (Fruit fly).